The sequence spans 59 residues: Large ribosomal subunit protein bL32c (59 aa).

Residues 1 to 19 show a composition bias toward basic residues; the sequence is MAVPKKRTSKAKKNARKAN. A disordered region spans residues 1-24; the sequence is MAVPKKRTSKAKKNARKANWKNQA.

It belongs to the bacterial ribosomal protein bL32 family.

It localises to the plastid. It is found in the chloroplast. The protein is Large ribosomal subunit protein bL32c (rpl32) of Porphyra purpurea (Red seaweed).